We begin with the raw amino-acid sequence, 1096 residues long: uncharacterized protein (1096 aa).

The protein belongs to the IIV-6 261R/396L/443R family.

This is an uncharacterized protein from Invertebrate iridescent virus 3 (IIV-3).